The sequence spans 236 residues: Phosphoribosylaminoimidazole-succinocarboxamide synthase (236 aa).

It belongs to the SAICAR synthetase family.

The enzyme catalyses 5-amino-1-(5-phospho-D-ribosyl)imidazole-4-carboxylate + L-aspartate + ATP = (2S)-2-[5-amino-1-(5-phospho-beta-D-ribosyl)imidazole-4-carboxamido]succinate + ADP + phosphate + 2 H(+). The protein operates within purine metabolism; IMP biosynthesis via de novo pathway; 5-amino-1-(5-phospho-D-ribosyl)imidazole-4-carboxamide from 5-amino-1-(5-phospho-D-ribosyl)imidazole-4-carboxylate: step 1/2. The protein is Phosphoribosylaminoimidazole-succinocarboxamide synthase of Rickettsia akari (strain Hartford).